A 447-amino-acid chain; its full sequence is UPF0328 protein ECU10_1870 (447 aa).

2 stretches are compositionally biased toward basic and acidic residues: residues M1–S10 and H64–T84. Disordered regions lie at residues M1–P103 and V147–I173. Over residues C92 to P103 the composition is skewed to pro residues.

Belongs to the UPF0328 family.

This Encephalitozoon cuniculi (strain GB-M1) (Microsporidian parasite) protein is UPF0328 protein ECU10_1870.